Here is a 290-residue protein sequence, read N- to C-terminus: 4-hydroxy-tetrahydrodipicolinate synthase (290 aa).

Thr-44 is a pyruvate binding site. Tyr-132 serves as the catalytic Proton donor/acceptor. The active-site Schiff-base intermediate with substrate is the Lys-160. Position 202 (Ile-202) interacts with pyruvate.

It belongs to the DapA family. As to quaternary structure, homotetramer; dimer of dimers.

It localises to the cytoplasm. It carries out the reaction L-aspartate 4-semialdehyde + pyruvate = (2S,4S)-4-hydroxy-2,3,4,5-tetrahydrodipicolinate + H2O + H(+). Its pathway is amino-acid biosynthesis; L-lysine biosynthesis via DAP pathway; (S)-tetrahydrodipicolinate from L-aspartate: step 3/4. Catalyzes the condensation of (S)-aspartate-beta-semialdehyde [(S)-ASA] and pyruvate to 4-hydroxy-tetrahydrodipicolinate (HTPA). The sequence is that of 4-hydroxy-tetrahydrodipicolinate synthase from Geobacter metallireducens (strain ATCC 53774 / DSM 7210 / GS-15).